Consider the following 87-residue polypeptide: U3-theraphotoxin-Hhn1f (87 aa).

The signal sequence occupies residues 1-24; sequence MVNMKASMFLTSAGLVLLFVVCYA. Residues 25–52 constitute a propeptide that is removed on maturation; sequence SESEEKEFPKEMLSSIFAVDNDFKQEER. Cystine bridges form between Cys-54/Cys-67, Cys-61/Cys-72, and Cys-66/Cys-79.

This sequence belongs to the neurotoxin 10 (Hwtx-1) family. 51 (Hntx-8) subfamily. Hntx-8 sub-subfamily. In terms of tissue distribution, expressed by the venom gland.

It localises to the secreted. Ion channel inhibitor. This Cyriopagopus hainanus (Chinese bird spider) protein is U3-theraphotoxin-Hhn1f.